The sequence spans 288 residues: Phosphatidylglycerol--prolipoprotein diacylglyceryl transferase (288 aa).

Transmembrane regions (helical) follow at residues 18–38 (WSLR…LACL), 68–88 (FFIY…VIFY), 107–127 (GLSS…FSWI), and 135–155 (LTFL…AFFI). Position 156 (arginine 156) interacts with a 1,2-diacyl-sn-glycero-3-phospho-(1'-sn-glycerol). 3 helical membrane-spanning segments follow: residues 193 to 213 (VQLY…FLSY), 222 to 242 (GYVT…AEYV), and 256 to 276 (LTIG…LLII).

It belongs to the Lgt family.

It is found in the cell inner membrane. The enzyme catalyses L-cysteinyl-[prolipoprotein] + a 1,2-diacyl-sn-glycero-3-phospho-(1'-sn-glycerol) = an S-1,2-diacyl-sn-glyceryl-L-cysteinyl-[prolipoprotein] + sn-glycerol 1-phosphate + H(+). Its pathway is protein modification; lipoprotein biosynthesis (diacylglyceryl transfer). Functionally, catalyzes the transfer of the diacylglyceryl group from phosphatidylglycerol to the sulfhydryl group of the N-terminal cysteine of a prolipoprotein, the first step in the formation of mature lipoproteins. This chain is Phosphatidylglycerol--prolipoprotein diacylglyceryl transferase, found in Chlamydia pneumoniae (Chlamydophila pneumoniae).